The chain runs to 175 residues: Respiratory supercomplex factor 1-B, mitochondrial (175 aa).

Residues 3–94 (DQADVLADPD…TERKQRREFE (92 aa)) form the HIG1 domain. The next 2 membrane-spanning stretches (helical) occupy residues 30–46 (PLIPLGCAATCYALYRA) and 66–83 (IYAQFFTLLAVVAGGMYY). Residues 83–115 (YKTERKQRREFEKKVEERKAQEKRDAWLRELEA) are a coiled coil.

The protein belongs to the RCF1 family. In terms of assembly, associates with the respiratory chain complex III/complex IV supercomplex.

The protein localises to the mitochondrion membrane. Functionally, cytochrome c oxidase subunit which plays a role in assembly of respiratory supercomplexes. The polypeptide is Respiratory supercomplex factor 1-B, mitochondrial (rcf1-B) (Talaromyces marneffei (strain ATCC 18224 / CBS 334.59 / QM 7333) (Penicillium marneffei)).